The sequence spans 673 residues: Methionine--tRNA ligase (673 aa).

Residues 14–24 carry the 'HIGH' region motif; sequence YYPSGKLHIGN. The 'KMSKS' region signature appears at 310 to 314; sequence KMSKS. Lys313 contacts ATP. The tRNA-binding domain occupies 571–673; that stretch reads VFDKVELKVA…SEAPNGSSIS (103 aa).

It belongs to the class-I aminoacyl-tRNA synthetase family. MetG type 2B subfamily. Homodimer.

The protein localises to the cytoplasm. The enzyme catalyses tRNA(Met) + L-methionine + ATP = L-methionyl-tRNA(Met) + AMP + diphosphate. Is required not only for elongation of protein synthesis but also for the initiation of all mRNA translation through initiator tRNA(fMet) aminoacylation. The protein is Methionine--tRNA ligase (metG) of Oceanobacillus iheyensis (strain DSM 14371 / CIP 107618 / JCM 11309 / KCTC 3954 / HTE831).